Here is a 565-residue protein sequence, read N- to C-terminus: Bicyclogermacrene synthase (565 aa).

Mg(2+) is bound by residues D317, D321, D461, and E469. A DDXXD motif motif is present at residues 317–321 (DDTFD).

It belongs to the terpene synthase family. Requires Mg(2+) as cofactor.

It catalyses the reaction (2E,6E)-farnesyl diphosphate = bicyclogermacrene + diphosphate. It functions in the pathway secondary metabolite biosynthesis; terpenoid biosynthesis. In terms of biological role, sesquiterpene synthase converting farnesyl diphosphate to bicyclogermacrene as the major product. The sequence is that of Bicyclogermacrene synthase from Phyla dulcis (Aztec sweet herb).